The sequence spans 357 residues: MFEAVEGMLAEHADLEQRLGAPETHADARLAKQLNQRYAALSSIIGAYRELQQLDDDIEAARELAQEDPAFAEEAAALTGRRQEVEERLRRLLVPRDAADDKDAILEVKSGEGGEESALFAGDLLRMYTRYAEARGWKVEVLDAAESDLGGYKSVTVAVKAKGTPEPGEAPYALLKFEGGVHRVQRVPVTESQGRVHTSAAGVLVLPEAEQVDVQIDENDLRIDVFRSSGPGGQSVNTTDSAVRITHLPTGIVVSCQNEKSQLQNREQAMRILRSRLLAAAQEKADAEAGEARRSQVRTVDRSERIRTYNFPENRISDHRTGYKAYNLDQVLDGDLQPVLDSCVEADLAARLEALEQ.

Q234 bears the N5-methylglutamine mark.

The protein belongs to the prokaryotic/mitochondrial release factor family. Post-translationally, methylated by PrmC. Methylation increases the termination efficiency of RF1.

It is found in the cytoplasm. Functionally, peptide chain release factor 1 directs the termination of translation in response to the peptide chain termination codons UAG and UAA. In Nocardioides sp. (strain ATCC BAA-499 / JS614), this protein is Peptide chain release factor 1.